A 56-amino-acid chain; its full sequence is Small ribosomal subunit protein bS21 (56 aa).

Belongs to the bacterial ribosomal protein bS21 family.

The sequence is that of Small ribosomal subunit protein bS21 from Synechococcus sp. (strain WH7803).